Reading from the N-terminus, the 130-residue chain is Ribosome-binding factor A (130 aa).

It belongs to the RbfA family. Monomer. Binds 30S ribosomal subunits, but not 50S ribosomal subunits or 70S ribosomes.

Its subcellular location is the cytoplasm. One of several proteins that assist in the late maturation steps of the functional core of the 30S ribosomal subunit. Associates with free 30S ribosomal subunits (but not with 30S subunits that are part of 70S ribosomes or polysomes). Required for efficient processing of 16S rRNA. May interact with the 5'-terminal helix region of 16S rRNA. In Flavobacterium johnsoniae (strain ATCC 17061 / DSM 2064 / JCM 8514 / BCRC 14874 / CCUG 350202 / NBRC 14942 / NCIMB 11054 / UW101) (Cytophaga johnsonae), this protein is Ribosome-binding factor A.